Reading from the N-terminus, the 1083-residue chain is DNA-directed RNA polymerase subunit beta (1083 aa).

It belongs to the RNA polymerase beta chain family. In plastids the minimal PEP RNA polymerase catalytic core is composed of four subunits: alpha, beta, beta', and beta''. When a (nuclear-encoded) sigma factor is associated with the core the holoenzyme is formed, which can initiate transcription.

It is found in the plastid. The protein resides in the chloroplast. The enzyme catalyses RNA(n) + a ribonucleoside 5'-triphosphate = RNA(n+1) + diphosphate. Functionally, DNA-dependent RNA polymerase catalyzes the transcription of DNA into RNA using the four ribonucleoside triphosphates as substrates. This Acorus calamus var. americanus (American sweet flag) protein is DNA-directed RNA polymerase subunit beta.